A 103-amino-acid chain; its full sequence is Histone H4 (103 aa).

A compositionally biased stretch (gly residues) spans 1-14 (MSGRGKGGKGLGKG). Positions 1 to 20 (MSGRGKGGKGLGKGGAKRHR) are disordered. An N6-acetyl-N6-methyllysine; alternate modification is found at Lys6. N6-acetyllysine; alternate occurs at positions 6, 9, and 13. An N6-methyllysine; alternate mark is found at Lys6, Lys9, and Lys13. An N6-butyryllysine; alternate mark is found at Lys9 and Lys13. The residue at position 13 (Lys13) is an N6-acetyl-N6-methyllysine; alternate. Lys17 carries the N6-acetyllysine modification. Residues 17–21 (KRHRK) mediate DNA binding. An N6-succinyllysine modification is found at Lys32. The residue at position 56 (Arg56) is an Omega-N-methylarginine. Ser61 and Ser65 each carry phosphoserine. Position 78 is an N6-succinyllysine (Lys78). Lys80 is subject to N6-acetyllysine. N6-glutaryllysine is present on Lys92.

The protein belongs to the histone H4 family. In terms of assembly, the nucleosome is a histone octamer containing two molecules each of H2A, H2B, H3 and H4 assembled in one H3-H4 heterotetramer and two H2A-H2B heterodimers. The octamer wraps approximately 147 bp of DNA. Histone H4 is a component of the UAF (upstream activation factor) complex which consists of UAF30, RRN5, RRN9, RRN10, and histones H3 and H4. Glutarylation at Lys-92 (H4K91glu) destabilizes nucleosomes by promoting dissociation of the H2A-H2B dimers from nucleosomes.

Its subcellular location is the nucleus. The protein localises to the chromosome. In terms of biological role, core component of nucleosome. Nucleosomes wrap and compact DNA into chromatin, limiting DNA accessibility to the cellular machineries which require DNA as a template. Histones thereby play a central role in transcription regulation, DNA repair, DNA replication and chromosomal stability. DNA accessibility is regulated via a complex set of post-translational modifications of histones, also called histone code, and nucleosome remodeling. Component of the UAF (upstream activation factor) complex which interacts with the upstream element of the RNA polymerase I promoter and forms a stable preinitiation complex. Together with SPT15/TBP UAF seems to stimulate basal transcription to a fully activated level. The chain is Histone H4 (HHF1) from Saccharomyces cerevisiae (strain ATCC 204508 / S288c) (Baker's yeast).